The sequence spans 256 residues: Tetraspanin-32 (256 aa).

4 helical membrane-spanning segments follow: residues 15–35 (LITN…VVVI), 61–81 (AFYV…LSTI), 90–110 (LMAA…QVAF), and 203–223 (CTSL…WFAI).

This sequence belongs to the tetraspanin (TM4SF) family. As to expression, expressed exclusively in hematopoietic tissues. Expression detected in spleen, thymus, bone marrow and peripheral blood leukocytes but not in heart, brain, lung, liver, kidney or testis.

Its subcellular location is the membrane. This Mus musculus (Mouse) protein is Tetraspanin-32 (Tspan32).